A 177-amino-acid polypeptide reads, in one-letter code: Nicotinamide-nucleotide adenylyltransferase (177 aa).

Belongs to the archaeal NMN adenylyltransferase family.

It is found in the cytoplasm. The catalysed reaction is beta-nicotinamide D-ribonucleotide + ATP + H(+) = diphosphate + NAD(+). It functions in the pathway cofactor biosynthesis; NAD(+) biosynthesis; NAD(+) from nicotinamide D-ribonucleotide: step 1/1. The sequence is that of Nicotinamide-nucleotide adenylyltransferase from Halobacterium salinarum (strain ATCC 29341 / DSM 671 / R1).